A 466-amino-acid chain; its full sequence is 3-isopropylmalate dehydratase large subunit (466 aa).

Positions 347, 407, and 410 each coordinate [4Fe-4S] cluster.

This sequence belongs to the aconitase/IPM isomerase family. LeuC type 1 subfamily. In terms of assembly, heterodimer of LeuC and LeuD. [4Fe-4S] cluster is required as a cofactor.

The catalysed reaction is (2R,3S)-3-isopropylmalate = (2S)-2-isopropylmalate. Its pathway is amino-acid biosynthesis; L-leucine biosynthesis; L-leucine from 3-methyl-2-oxobutanoate: step 2/4. Catalyzes the isomerization between 2-isopropylmalate and 3-isopropylmalate, via the formation of 2-isopropylmaleate. The sequence is that of 3-isopropylmalate dehydratase large subunit from Shewanella halifaxensis (strain HAW-EB4).